A 125-amino-acid polypeptide reads, in one-letter code: Cytochrome c2 (125 aa).

The N-terminal stretch at Met-1–Ala-21 is a signal peptide. The Cytochrome c domain maps to Gly-23–His-123. Positions 35, 38, 39, and 101 each coordinate heme c.

This sequence belongs to the cytochrome c family. Binds 1 heme c group covalently per subunit.

In terms of biological role, cytochrome c2 is found mainly in purple, non-sulfur, photosynthetic bacteria where it functions as the electron donor to the oxidized bacteriochlorophyll in the photophosphorylation pathway. However, it may also have a role in the respiratory chain and is found in some non-photosynthetic bacteria. In Rhodomicrobium vannielii (strain ATCC 17100 / DSM 162 / LMG 4299 / NCIMB 10020 / ATH 3.1.1), this protein is Cytochrome c2.